Consider the following 126-residue polypeptide: Glycine cleavage system H protein (126 aa).

The 83-residue stretch at 21-103 (TVTVGISNHA…YEGGWIARIK (83 aa)) folds into the Lipoyl-binding domain. Lys62 carries the N6-lipoyllysine modification.

The protein belongs to the GcvH family. The glycine cleavage system is composed of four proteins: P, T, L and H. (R)-lipoate serves as cofactor.

The glycine cleavage system catalyzes the degradation of glycine. The H protein shuttles the methylamine group of glycine from the P protein to the T protein. This Aliivibrio salmonicida (strain LFI1238) (Vibrio salmonicida (strain LFI1238)) protein is Glycine cleavage system H protein.